Here is a 273-residue protein sequence, read N- to C-terminus: Dermonecrotic toxin LhSicTox-alphaIA2aii (273 aa).

Residue histidine 5 is part of the active site. The Mg(2+) site is built by glutamate 25 and aspartate 27. The Nucleophile role is filled by histidine 41. Disulfide bonds link cysteine 45–cysteine 51 and cysteine 47–cysteine 190. Aspartate 85 contacts Mg(2+).

Belongs to the arthropod phospholipase D family. Class II subfamily. Mg(2+) is required as a cofactor. As to expression, expressed by the venom gland.

The protein resides in the secreted. The enzyme catalyses an N-(acyl)-sphingosylphosphocholine = an N-(acyl)-sphingosyl-1,3-cyclic phosphate + choline. The catalysed reaction is an N-(acyl)-sphingosylphosphoethanolamine = an N-(acyl)-sphingosyl-1,3-cyclic phosphate + ethanolamine. It catalyses the reaction a 1-acyl-sn-glycero-3-phosphocholine = a 1-acyl-sn-glycero-2,3-cyclic phosphate + choline. It carries out the reaction a 1-acyl-sn-glycero-3-phosphoethanolamine = a 1-acyl-sn-glycero-2,3-cyclic phosphate + ethanolamine. In terms of biological role, dermonecrotic toxins cleave the phosphodiester linkage between the phosphate and headgroup of certain phospholipids (sphingolipid and lysolipid substrates), forming an alcohol (often choline) and a cyclic phosphate. This toxin acts on sphingomyelin (SM). It may also act on ceramide phosphoethanolamine (CPE), lysophosphatidylcholine (LPC) and lysophosphatidylethanolamine (LPE), but not on lysophosphatidylserine (LPS), and lysophosphatidylglycerol (LPG). It acts by transphosphatidylation, releasing exclusively cyclic phosphate products as second products. Induces dermonecrosis, hemolysis, increased vascular permeability, edema, inflammatory response, and platelet aggregation. The sequence is that of Dermonecrotic toxin LhSicTox-alphaIA2aii from Loxosceles hirsuta (Recluse spider).